Reading from the N-terminus, the 195-residue chain is uncharacterized protein (195 aa).

2 consecutive transmembrane segments (helical) span residues 13–32 (VIGLWLPILVILILFAFLVA) and 42–64 (LSNSVVALATAIMASAALVTILV).

It localises to the cell membrane. This is an uncharacterized protein from Archaeoglobus fulgidus (strain ATCC 49558 / DSM 4304 / JCM 9628 / NBRC 100126 / VC-16).